The chain runs to 345 residues: Holliday junction branch migration complex subunit RuvB (345 aa).

The segment at 1 to 186 is large ATPase domain (RuvB-L); sequence MSTDPDEREV…FGFTAHMDFY (186 aa). ATP-binding positions include L25, R26, G67, K70, T71, S72, 133 to 135, R176, Y186, and R223; that span reads EDF. T71 contributes to the Mg(2+) binding site. The segment at 187–257 is small ATPAse domain (RuvB-S); it reads EPAELERVLV…VAKAALAVYD (71 aa). Residues 260 to 345 form a head domain (RuvB-H) region; the sequence is ELGLDRLDRA…AGANQPGLFE (86 aa). DNA-binding residues include R315 and R320.

The protein belongs to the RuvB family. Homohexamer. Forms an RuvA(8)-RuvB(12)-Holliday junction (HJ) complex. HJ DNA is sandwiched between 2 RuvA tetramers; dsDNA enters through RuvA and exits via RuvB. An RuvB hexamer assembles on each DNA strand where it exits the tetramer. Each RuvB hexamer is contacted by two RuvA subunits (via domain III) on 2 adjacent RuvB subunits; this complex drives branch migration. In the full resolvosome a probable DNA-RuvA(4)-RuvB(12)-RuvC(2) complex forms which resolves the HJ.

The protein localises to the cytoplasm. It carries out the reaction ATP + H2O = ADP + phosphate + H(+). The RuvA-RuvB-RuvC complex processes Holliday junction (HJ) DNA during genetic recombination and DNA repair, while the RuvA-RuvB complex plays an important role in the rescue of blocked DNA replication forks via replication fork reversal (RFR). RuvA specifically binds to HJ cruciform DNA, conferring on it an open structure. The RuvB hexamer acts as an ATP-dependent pump, pulling dsDNA into and through the RuvAB complex. RuvB forms 2 homohexamers on either side of HJ DNA bound by 1 or 2 RuvA tetramers; 4 subunits per hexamer contact DNA at a time. Coordinated motions by a converter formed by DNA-disengaged RuvB subunits stimulates ATP hydrolysis and nucleotide exchange. Immobilization of the converter enables RuvB to convert the ATP-contained energy into a lever motion, pulling 2 nucleotides of DNA out of the RuvA tetramer per ATP hydrolyzed, thus driving DNA branch migration. The RuvB motors rotate together with the DNA substrate, which together with the progressing nucleotide cycle form the mechanistic basis for DNA recombination by continuous HJ branch migration. Branch migration allows RuvC to scan DNA until it finds its consensus sequence, where it cleaves and resolves cruciform DNA. This chain is Holliday junction branch migration complex subunit RuvB, found in Mycobacterium ulcerans (strain Agy99).